The primary structure comprises 463 residues: MAVTGGGRPAARQQAARGKQMQRTFNNVKITLICGFITLLVLRGTVGINLLTYGVGGGGGSDAVAAAEEARVVEDIERILREIRSDTDDDDDDEEEEPLGVDASTTTTTNSTTTTATAARRRSSNHTYTLGPKVTRWNAKRRQWLSRNPGFPSRDARGKPRILLVTGSQPAPCDDAAGDHYLLKATKNKIDYCRIHGIEIVHSMAHLDRELAGYWAKLPLLRRLMLSHPEVEWVWWMDSDALFTDMAFELPLARYDTSNLVIHGYPELLFAKRSWIALNTGSFLLRNCQWSLELLDAWAPMGPKGRVRDEAGKVLTASLTGRPAFEADDQSALIHILLTQKERWMDKVYVEDKYFLHGFWAGLVDKYEEMMERHHPGLGDERWPFVTHFVGCKPCGGYGDYPRERCLGGMERAFNFADNQVLRLYGFRHRSLASARVRRVANRTDNPLVNKEAALKMDAKIES.

Residues 1 to 20 (MAVTGGGRPAARQQAARGKQ) are disordered. Residues 1 to 24 (MAVTGGGRPAARQQAARGKQMQRT) lie on the Cytoplasmic side of the membrane. Residues 9–20 (PAARQQAARGKQ) are compositionally biased toward low complexity. Residues 25 to 47 (FNNVKITLICGFITLLVLRGTVG) form a helical; Signal-anchor for type II membrane protein membrane-spanning segment. Residues 48–463 (INLLTYGVGG…ALKMDAKIES (416 aa)) lie on the Lumenal side of the membrane. Residues 82 to 125 (EIRSDTDDDDDDEEEEPLGVDASTTTTTNSTTTTATAARRRSSN) form a disordered region. A compositionally biased stretch (acidic residues) spans 87–99 (TDDDDDDEEEEPL). The segment covering 103 to 118 (ASTTTTTNSTTTTATA) has biased composition (low complexity). 3 N-linked (GlcNAc...) asparagine glycosylation sites follow: Asn110, Asn125, and Asn442.

This sequence belongs to the glycosyltransferase 34 family.

It localises to the golgi apparatus membrane. Its function is as follows. Probable glycosyltransferase that may be involved in the biosynthesis of xyloglucan. This Oryza sativa subsp. indica (Rice) protein is Probable glycosyltransferase 3.